A 372-amino-acid polypeptide reads, in one-letter code: 4-hydroxy-3-methylbut-2-en-1-yl diphosphate synthase (flavodoxin) (372 aa).

Positions 270, 273, 305, and 312 each coordinate [4Fe-4S] cluster.

It belongs to the IspG family. [4Fe-4S] cluster serves as cofactor.

The enzyme catalyses (2E)-4-hydroxy-3-methylbut-2-enyl diphosphate + oxidized [flavodoxin] + H2O + 2 H(+) = 2-C-methyl-D-erythritol 2,4-cyclic diphosphate + reduced [flavodoxin]. It functions in the pathway isoprenoid biosynthesis; isopentenyl diphosphate biosynthesis via DXP pathway; isopentenyl diphosphate from 1-deoxy-D-xylulose 5-phosphate: step 5/6. Converts 2C-methyl-D-erythritol 2,4-cyclodiphosphate (ME-2,4cPP) into 1-hydroxy-2-methyl-2-(E)-butenyl 4-diphosphate. The polypeptide is 4-hydroxy-3-methylbut-2-en-1-yl diphosphate synthase (flavodoxin) (Escherichia coli O139:H28 (strain E24377A / ETEC)).